A 41-amino-acid polypeptide reads, in one-letter code: GTPCKCHGYIGVYWFMLAGCPNGYGYNLSCPYFLGICCVDR.

Disulfide bonds link Cys4/Cys37, Cys6/Cys30, and Cys20/Cys38.

Belongs to the sea anemone type 3 (BDS) potassium channel toxin family.

Its subcellular location is the secreted. The protein localises to the nematocyst. Weakly inhibits human homomeric ASIC3 (IC(50)=5.5 uM). This chain is Pi-stichotoxin-Hcr5a, found in Radianthus crispa (Leathery sea anemone).